A 348-amino-acid chain; its full sequence is N-formyl peptide receptor 2 (348 aa).

A glycan (N-linked (GlcNAc...) asparagine) is linked at Asn-1. At 1-24 (NFSTPLNEHEEVSYESAGYTVLRI) the chain is on the extracellular side. A helical membrane pass occupies residues 25 to 47 (LPLVVLGVTFVLGVLGNGLVIWV). At 48-58 (AGFRMTRTVTT) the chain is on the cytoplasmic side. The helical transmembrane segment at 59–80 (ICYLNLALADFSFTATLPFLIV) threads the bilayer. The Extracellular segment spans residues 81–97 (SMAMGEKWPFGWFLCKL). A disulfide bridge links Cys-95 with Cys-173. Residues 98–118 (IHIVVDINLFGSVFLIGFIAL) traverse the membrane as a helical segment. At 119–137 (DRCICVLHPVWAQNHRTVS) the chain is on the cytoplasmic side. Residues 138 to 159 (LAMKVIVGPWILALVLTLPVFL) form a helical membrane-spanning segment. The Extracellular segment spans residues 160-202 (FLTTVTIPNGDTYCTFNFASWGGTPEERQKVAITMLTARGIIR). Residues 203-223 (FVIGFSLPMSIVAICYGLIAA) form a helical membrane-spanning segment. Over 224–239 (KIHKKGMIKSSRPLRV) the chain is Cytoplasmic. A helical transmembrane segment spans residues 240 to 263 (LTAVVASFFICWFPFQLVALLGTV). The Extracellular portion of the chain corresponds to 264–283 (WLKEMLFYGKYKIIDILVNP). Residues 284–303 (TSSLAFFNSCLNPMLYVFVG) traverse the membrane as a helical segment. Residues 304-348 (QDFRERLIHSLPTSLERALSEDSAPTNDTAASCASPPAETELQAM) lie on the Cytoplasmic side of the membrane. Residues 323–348 (SEDSAPTNDTAASCASPPAETELQAM) form a disordered region. Polar residues predominate over residues 326 to 335 (SAPTNDTAAS).

This sequence belongs to the G-protein coupled receptor 1 family. As to quaternary structure, interacts with APP; the interaction takes place at the cell surface and the complex is then rapidly internalized.

Its subcellular location is the cell membrane. Low affinity receptor for N-formyl-methionyl peptides, which are powerful neutrophil chemotactic factors. Binding of FMLP to the receptor causes activation of neutrophils. This response is mediated via a G-protein that activates a phosphatidylinositol-calcium second messenger system. Receptor for the chemokine-like protein FAM19A5, mediating FAM19A5-stimulated macrophage chemotaxis and the inhibitory effect on TNFSF11/RANKL-induced osteoclast differentiation. The protein is N-formyl peptide receptor 2 (FPR2) of Gorilla gorilla gorilla (Western lowland gorilla).